Here is a 384-residue protein sequence, read N- to C-terminus: NAD-capped RNA hydrolase NPY1 (384 aa).

Residues cysteine 179, cysteine 182, cysteine 197, and cysteine 206 each coordinate Zn(2+). The 133-residue stretch at 219-351 folds into the Nudix hydrolase domain; it reads PRTDPTVIIA…AGGYRVPFKN (133 aa). Mg(2+) is bound by residues alanine 256, glutamate 272, glutamate 276, and glutamate 322. Substrate is bound by residues 256–258, glutamate 272, glutamate 276, and glutamate 322; that span reads AGF. The Nudix box signature appears at 257–278; the sequence is GFMEPSETIEEACIREIWEETG. The short motif at 378–380 is the Microbody targeting signal element; the sequence is KTS.

The protein belongs to the Nudix hydrolase family. NudC subfamily. In terms of assembly, homodimer. Requires Mg(2+) as cofactor. The cofactor is Zn(2+).

Its subcellular location is the peroxisome. The catalysed reaction is a 5'-end NAD(+)-phospho-ribonucleoside in mRNA + H2O = a 5'-end phospho-adenosine-phospho-ribonucleoside in mRNA + beta-nicotinamide D-ribonucleotide + 2 H(+). It carries out the reaction NAD(+) + H2O = beta-nicotinamide D-ribonucleotide + AMP + 2 H(+). The enzyme catalyses NADH + H2O = reduced beta-nicotinamide D-ribonucleotide + AMP + 2 H(+). In terms of biological role, mRNA decapping enzyme that specifically removes the nicotinamide adenine dinucleotide (NAD) cap from a subset of mRNAs by hydrolyzing the diphosphate linkage to produce nicotinamide mononucleotide (NMN) and 5' monophosphate mRNA. The NAD-cap is present at the 5'-end of some RNAs; in contrast to the canonical N7 methylguanosine (m7G) cap, the NAD cap promotes mRNA decay. Mediates the hydrolysis of some nucleoside diphosphate derivatives. This chain is NAD-capped RNA hydrolase NPY1, found in Saccharomyces cerevisiae (strain ATCC 204508 / S288c) (Baker's yeast).